The primary structure comprises 63 residues: Large ribosomal subunit protein uL30 (63 aa).

The protein belongs to the universal ribosomal protein uL30 family. In terms of assembly, part of the 50S ribosomal subunit.

This Rickettsia felis (strain ATCC VR-1525 / URRWXCal2) (Rickettsia azadi) protein is Large ribosomal subunit protein uL30.